The primary structure comprises 139 residues: Large ribosomal subunit protein uL16 (139 aa).

Positions 1-20 (MLIPKRTKYRKQHRPVRRGM) are enriched in basic residues. The segment at 1 to 21 (MLIPKRTKYRKQHRPVRRGMS) is disordered.

The protein belongs to the universal ribosomal protein uL16 family. As to quaternary structure, part of the 50S ribosomal subunit.

Functionally, binds 23S rRNA and is also seen to make contacts with the A and possibly P site tRNAs. The protein is Large ribosomal subunit protein uL16 of Bifidobacterium adolescentis (strain ATCC 15703 / DSM 20083 / NCTC 11814 / E194a).